Consider the following 214-residue polypeptide: ER lumen protein-retaining receptor 3 (214 aa).

Residues 1-4 (MNVF) lie on the Lumenal side of the membrane. Residues 5-24 (RILGDLSHLLAMILLLVKIW) form a helical membrane-spanning segment. Over 25–32 (RSKSCAGI) the chain is Cytoplasmic. A helical membrane pass occupies residues 33 to 52 (SGKSQILFALVFTTRYLDLF). The interval 47 to 48 (RY) is interaction with the K-D-E-L motif on target proteins. Residues 53–58 (SNFISI) are Lumenal-facing. A helical transmembrane segment spans residues 59 to 79 (YNTVMKVVFLLCAYVTVYMIY). Residues 80 to 92 (WKFRKTFDIENDT) are Cytoplasmic-facing. Residues 93–110 (FRLEFLLVPVTGLSFLVN) form a helical membrane-spanning segment. Topologically, residues 111–116 (YSYTPM) are lumenal. Residues 117–135 (EVLWTFSIYLESVAILPQL) form a helical membrane-spanning segment. Residues 136–149 (FMISKTGEAETITT) are Cytoplasmic-facing. Residues 150-168 (HYLFFLGLYRLLYLANWIR) traverse the membrane as a helical segment. The tract at residues 159-169 (RLLYLANWIRR) is interaction with the K-D-E-L motif on target proteins. The Lumenal segment spans residues 169–178 (RYQTENFYDQ). A helical membrane pass occupies residues 179–199 (ISVVSGVVQTIFYCDFFYLYV). At 200–214 (TKVLKGKKLSLPVPV) the chain is on the cytoplasmic side. Positions 204-207 (KGKK) are important for recycling of cargo proteins with the sequence motif K-D-E-L from the Golgi to the endoplasmic reticulum.

This sequence belongs to the ERD2 family.

It is found in the endoplasmic reticulum membrane. The protein localises to the golgi apparatus membrane. The protein resides in the cytoplasmic vesicle. Its subcellular location is the COPI-coated vesicle membrane. Receptor for the C-terminal sequence motif K-D-E-L that is present on endoplasmic reticulum resident proteins and that mediates their recycling from the Golgi back to the endoplasmic reticulum. This Mus musculus (Mouse) protein is ER lumen protein-retaining receptor 3 (Kdelr3).